Consider the following 1442-residue polypeptide: DNA polymerase III PolC-type (1442 aa).

Positions Y426–F582 constitute an Exonuclease domain.

This sequence belongs to the DNA polymerase type-C family. PolC subfamily.

The protein localises to the cytoplasm. It catalyses the reaction DNA(n) + a 2'-deoxyribonucleoside 5'-triphosphate = DNA(n+1) + diphosphate. Its function is as follows. Required for replicative DNA synthesis. This DNA polymerase also exhibits 3' to 5' exonuclease activity. The protein is DNA polymerase III PolC-type of Staphylococcus epidermidis (strain ATCC 12228 / FDA PCI 1200).